A 143-amino-acid chain; its full sequence is Nucleoside diphosphate kinase (143 aa).

Residues lysine 11, phenylalanine 59, arginine 87, threonine 93, arginine 104, and asparagine 114 each coordinate ATP. The Pros-phosphohistidine intermediate role is filled by histidine 117.

It belongs to the NDK family. In terms of assembly, homotetramer. Mg(2+) serves as cofactor.

It is found in the cytoplasm. The enzyme catalyses a 2'-deoxyribonucleoside 5'-diphosphate + ATP = a 2'-deoxyribonucleoside 5'-triphosphate + ADP. It catalyses the reaction a ribonucleoside 5'-diphosphate + ATP = a ribonucleoside 5'-triphosphate + ADP. Its function is as follows. Major role in the synthesis of nucleoside triphosphates other than ATP. The ATP gamma phosphate is transferred to the NDP beta phosphate via a ping-pong mechanism, using a phosphorylated active-site intermediate. The protein is Nucleoside diphosphate kinase of Shewanella frigidimarina (strain NCIMB 400).